Here is a 248-residue protein sequence, read N- to C-terminus: 3-deoxy-manno-octulosonate cytidylyltransferase 2 (248 aa).

It belongs to the KdsB family.

It is found in the cytoplasm. It catalyses the reaction 3-deoxy-alpha-D-manno-oct-2-ulosonate + CTP = CMP-3-deoxy-beta-D-manno-octulosonate + diphosphate. It participates in nucleotide-sugar biosynthesis; CMP-3-deoxy-D-manno-octulosonate biosynthesis; CMP-3-deoxy-D-manno-octulosonate from 3-deoxy-D-manno-octulosonate and CTP: step 1/1. The protein operates within bacterial outer membrane biogenesis; lipopolysaccharide biosynthesis. Its function is as follows. Activates KDO (a required 8-carbon sugar) for incorporation into bacterial lipopolysaccharide in Gram-negative bacteria. This Hydrogenovibrio crunogenus (strain DSM 25203 / XCL-2) (Thiomicrospira crunogena) protein is 3-deoxy-manno-octulosonate cytidylyltransferase 2.